The primary structure comprises 194 residues: uncharacterized protein (194 aa).

The N-terminal stretch at 1-20 (MLYKFTVLLLIYSYLRNLQA) is a signal peptide. Asn-31, Asn-72, Asn-133, and Asn-157 each carry an N-linked (GlcNAc...) asparagine; by host glycan.

This is an uncharacterized protein from Ostreid herpesvirus 1 (isolate France) (OsHV-1).